Reading from the N-terminus, the 606-residue chain is Endonuclease 8-like 3 (606 aa).

The Schiff-base intermediate with DNA; via amino nitrogen role is filled by valine 2. Residues asparagine 193 and arginine 272 each contribute to the DNA site. The FPG-type zinc finger occupies 248–282 (KVYKRPNCDQCHSKITVCRFGENSRMTYFCPHCQK). Residues 318 to 347 (SEEQWSCVVCTLINRPSAKACDACLTTRPL) form a RanBP2-type zinc finger. Position 451 is a phosphoserine (serine 451). The span at 479-494 (KSYNSGLSNSELQTNR) shows a compositional bias: polar residues. Residues 479–506 (KSYNSGLSNSELQTNRTRGHHSKSDGSP) form a disordered region. Cysteine 508, histidine 511, cysteine 534, cysteine 542, cysteine 555, histidine 557, cysteine 580, and cysteine 588 together coordinate Zn(2+). GRF-type zinc fingers lie at residues 508-551 (CKMH…ADLS) and 555-597 (CRHG…AENG).

It belongs to the FPG family. As to expression, expressed in testis, thymus, spleen and bone marrow. In young mice, expressed at higher levels in thymocytes than splenocytes. At 12 dpc, abundant in the subventricular zone (SVZ) of the lateral ventricles. At 17.5 dpc and P0, expression is limited to distinct cells in the cortical SVZ, in cells of the secondary matrix, the dentate gyrus migratory route and the dentate gyrus.

The protein localises to the nucleus. Its subcellular location is the chromosome. The catalysed reaction is 2'-deoxyribonucleotide-(2'-deoxyribose 5'-phosphate)-2'-deoxyribonucleotide-DNA = a 3'-end 2'-deoxyribonucleotide-(2,3-dehydro-2,3-deoxyribose 5'-phosphate)-DNA + a 5'-end 5'-phospho-2'-deoxyribonucleoside-DNA + H(+). In terms of biological role, DNA glycosylase which prefers single-stranded DNA (ssDNA), or partially ssDNA structures such as bubble and fork structures, to double-stranded DNA (dsDNA). Mediates interstrand cross-link repair in response to replication stress: acts by mediating DNA glycosylase activity, cleaving one of the two N-glycosyl bonds comprising the interstrand cross-link, which avoids the formation of a double-strand break but generates an abasic site that is bypassed by translesion synthesis polymerases. In vitro, displays strong glycosylase activity towards the hydantoin lesions spiroiminodihydantoin (Sp) and guanidinohydantoin (Gh) in both ssDNA and dsDNA; also recognizes FapyA, FapyG, 5-OHU, 5-OHC, 5-OHMH, Tg and 8-oxoA lesions in ssDNA. No activity on 8-oxoG detected. Also shows weak DNA-(apurinic or apyrimidinic site) lyase activity. In vivo, appears to be the primary enzyme involved in removing Sp and Gh from ssDNA in neonatal tissues. This is Endonuclease 8-like 3 (Neil3) from Mus musculus (Mouse).